Consider the following 107-residue polypeptide: Thiosulfate sulfurtransferase GlpE (107 aa).

The 89-residue stretch at 19 to 107 (QDLNAVLVDI…WHKAGLPVEK (89 aa)) folds into the Rhodanese domain. C67 serves as the catalytic Cysteine persulfide intermediate.

The protein belongs to the GlpE family.

The protein localises to the cytoplasm. The enzyme catalyses thiosulfate + hydrogen cyanide = thiocyanate + sulfite + 2 H(+). It carries out the reaction thiosulfate + [thioredoxin]-dithiol = [thioredoxin]-disulfide + hydrogen sulfide + sulfite + 2 H(+). In terms of biological role, transferase that catalyzes the transfer of sulfur from thiosulfate to thiophilic acceptors such as cyanide or dithiols. May function in a CysM-independent thiosulfate assimilation pathway by catalyzing the conversion of thiosulfate to sulfite, which can then be used for L-cysteine biosynthesis. The polypeptide is Thiosulfate sulfurtransferase GlpE (Aliivibrio fischeri (strain ATCC 700601 / ES114) (Vibrio fischeri)).